The sequence spans 120 residues: Anti-adapter protein IraM (120 aa).

This sequence belongs to the IraM/RssC family.

The protein resides in the cytoplasm. Involved in the stabilization of the sigma stress factor RpoS. In Salmonella choleraesuis (strain SC-B67), this protein is Anti-adapter protein IraM.